Reading from the N-terminus, the 171-residue chain is uncharacterized protein (171 aa).

This is an uncharacterized protein from Caenorhabditis elegans.